We begin with the raw amino-acid sequence, 2353 residues long: Otogelin-like protein (2353 aa).

The signal sequence occupies residues 1–31 (MNIVRKLNLMIPWSIFLLHVLLFSLQEYICA). Residues 121–297 (GICKTWGQYH…VQTPDDTKCV (177 aa)) enclose the VWFD 1 domain. Cystine bridges form between Cys-123–Cys-257 and Cys-145–Cys-296. Asn-144 carries an N-linked (GlcNAc...) asparagine glycan. In terms of domain architecture, TIL 1 spans 390–443 (CDDSFVHRDCISCCPPTCTFEKQCLGSNLHCLDGCYCPDGLVMDNGTCISLENC). N-linked (GlcNAc...) asparagine glycans are attached at residues Asn-434 and Asn-473. A VWFD 2 domain is found at 481–654 (VQCSVVGDSH…NAWRVSSTCF (174 aa)). 3 disulfides stabilise this stretch: Cys-483–Cys-618, Cys-505–Cys-653, and Cys-527–Cys-535. Positions 745-800 (CQKGMLYHHCSSFCLHSCISLSSPEQCSDDCAEGCNCPEGKFYEDTLNFCVPIFHC) constitute a TIL 2 domain. N-linked (GlcNAc...) asparagine glycosylation is found at Asn-826 and Asn-876. The region spanning 946 to 1115 (AVCTIYGDRH…SWALGQCESP (170 aa)) is the VWFD 3 domain. Disulfide bonds link Cys-948/Cys-1078 and Cys-992/Cys-999. Residues Asn-1289, Asn-1604, and Asn-2198 are each glycosylated (N-linked (GlcNAc...) asparagine). The region spanning 1534 to 1723 (CRCSMLSELS…SWEIEKSFEV (190 aa)) is the VWFD 4 domain. A disulfide bond links Cys-1536 and Cys-1683. Cystine bridges form between Cys-2261-Cys-2317, Cys-2282-Cys-2331, Cys-2293-Cys-2348, and Cys-2297-Cys-2350. The 93-residue stretch at 2261-2353 (CKREERICQK…EPIDCTCQWN (93 aa)) folds into the CTCK domain.

Belongs to the otogelin family. As to expression, expressed at high levels in fetal inner ear and heart. Low levels in fetal skeletal muscle, kidney, spleen and colon. Not detected in fetal liver, lung, brain, nor in fetal stomach. In adult tissues, highest levels in brain, kidney, heart and retina. Relatively low levels in lung, spleen and duodenum. Not detected in adult skeletal muscle, liver, nor testis.

It is found in the secreted. In Homo sapiens (Human), this protein is Otogelin-like protein (OTOGL).